We begin with the raw amino-acid sequence, 329 residues long: 36 kDa antigen (329 aa).

The helical transmembrane segment at 11–31 (AILTGGGALLLGLIVLFYLAY) threads the bilayer.

This sequence belongs to the membrane fusion protein (MFP) (TC 8.A.1) family.

It is found in the membrane. The chain is 36 kDa antigen from Helicobacter pylori (strain J99 / ATCC 700824) (Campylobacter pylori J99).